We begin with the raw amino-acid sequence, 404 residues long: Tryptophan synthase beta chain (404 aa).

An N6-(pyridoxal phosphate)lysine modification is found at Lys98.

It belongs to the TrpB family. In terms of assembly, tetramer of two alpha and two beta chains. Pyridoxal 5'-phosphate serves as cofactor.

It catalyses the reaction (1S,2R)-1-C-(indol-3-yl)glycerol 3-phosphate + L-serine = D-glyceraldehyde 3-phosphate + L-tryptophan + H2O. Its pathway is amino-acid biosynthesis; L-tryptophan biosynthesis; L-tryptophan from chorismate: step 5/5. In terms of biological role, the beta subunit is responsible for the synthesis of L-tryptophan from indole and L-serine. In Rhodopseudomonas palustris (strain BisA53), this protein is Tryptophan synthase beta chain.